The following is a 534-amino-acid chain: MNSLTNIEDLNCDNQHIPNGFRRWIFSTNHKDIGIMYIIFAIFAGVVGGLFSLLFRLELAMPGGTFLNHNFQLYNVLITVHAIIMVFFMIMPALFSGFGNYFVPLLIGAPDMAFPRLNNISFWLLIPAFLLLISSTFIDGGPGTGWTLYPPLSNLNGHTGAAVDVAIFSLHLTGLSSILGSINLIVTIFNMRTPGMGLFKMPLFVWSILVTAFLIILAMPVLSGAITMLLTDRNFGTTFFKPDGGGDPLLFQHLFWFFGHPEVYIVILPGFGIVSQVISTFSRKPIFGYQGMVGAMVIIGFVGFIVWAHHMFTVGLSYNALIYFTAGTMIIAVPTGIKIFSWIATMWGGSITFPTPMLFAIGFIILFTIGGVTGIILSNSALDRVLHDTYYVVAHFHYTMSLGALFTAFAGFYYWFGKISGKQYPEILGKIHFWITFIGVNLTFFPQHFLGLAGMPRRIPDYPEAFAGWNMVSSIGAGISIFAAFYFVFIVFYTLKYGKNCTANPWGDGADTLEWKLNSPPPFHTFETPPHIVE.

Helical transmembrane passes span 35 to 55, 76 to 96, 97 to 117, 120 to 140, 165 to 185, 202 to 222, 254 to 274, and 286 to 306; these read IMYIIFAIFAGVVGGLFSLLF, VLITVHAIIMVFFMIMPALFS, GFGNYFVPLLIGAPDMAFPRL, ISFWLLIPAFLLLISSTFIDG, VAIFSLHLTGLSSILGSINLI, PLFVWSILVTAFLIILAMPVL, LFWFFGHPEVYIVILPGFGIV, and IFGYQGMVGAMVIIGFVGFIV. His81 lines the Fe(II)-heme a pocket. His260 and Tyr264 together coordinate Cu cation. The segment at residues 260 to 264 is a cross-link (1'-histidyl-3'-tyrosine (His-Tyr)); sequence HPEVY. 2 residues coordinate Cu cation: His309 and His310. The next 2 helical transmembrane spans lie at 320–340 and 357–377; these read ALIYFTAGTMIIAVPTGIKIF and MLFAIGFIILFTIGGVTGIIL. Position 395 (His395) interacts with heme a3. 3 consecutive transmembrane segments (helical) span residues 396–416, 433–453, and 475–495; these read FHYTMSLGALFTAFAGFYYWF, FWITFIGVNLTFFPQHFLGLA, and IGAGISIFAAFYFVFIVFYTL. His397 serves as a coordination point for Fe(II)-heme a.

Belongs to the heme-copper respiratory oxidase family.

It localises to the cell membrane. It catalyses the reaction 4 Fe(II)-[cytochrome c] + O2 + 8 H(+)(in) = 4 Fe(III)-[cytochrome c] + 2 H2O + 4 H(+)(out). Its pathway is energy metabolism; oxidative phosphorylation. Cytochrome c oxidase is the component of the respiratory chain that catalyzes the reduction of oxygen to water. Subunits 1-3 form the functional core of the enzyme complex. CO I is the catalytic subunit of the enzyme. Electrons originating in cytochrome c are transferred via the copper A center of subunit 2 and heme A of subunit 1 to the bimetallic center formed by heme A3 and copper B. The sequence is that of Probable cytochrome c oxidase subunit 1 (ctaD) from Rickettsia prowazekii (strain Madrid E).